A 258-amino-acid chain; its full sequence is Indole-3-glycerol phosphate synthase (258 aa).

It belongs to the TrpC family.

It carries out the reaction 1-(2-carboxyphenylamino)-1-deoxy-D-ribulose 5-phosphate + H(+) = (1S,2R)-1-C-(indol-3-yl)glycerol 3-phosphate + CO2 + H2O. The protein operates within amino-acid biosynthesis; L-tryptophan biosynthesis; L-tryptophan from chorismate: step 4/5. This chain is Indole-3-glycerol phosphate synthase, found in Exiguobacterium sibiricum (strain DSM 17290 / CCUG 55495 / CIP 109462 / JCM 13490 / 255-15).